The sequence spans 428 residues: Histidine--tRNA ligase (428 aa).

The protein belongs to the class-II aminoacyl-tRNA synthetase family. In terms of assembly, homodimer.

Its subcellular location is the cytoplasm. The catalysed reaction is tRNA(His) + L-histidine + ATP = L-histidyl-tRNA(His) + AMP + diphosphate + H(+). This Buchnera aphidicola subsp. Schizaphis graminum (strain Sg) protein is Histidine--tRNA ligase.